Reading from the N-terminus, the 82-residue chain is RNA-binding protein Hfq (82 aa).

The Sm domain occupies 9–68 (DPFLNTLRKEHVPVSIYLVNGIKLQGKVDSFDQYVIMLKNTVSQMVYKHAISTIVPGRPV).

The protein belongs to the Hfq family. Homohexamer.

RNA chaperone that binds small regulatory RNA (sRNAs) and mRNAs to facilitate mRNA translational regulation in response to envelope stress, environmental stress and changes in metabolite concentrations. Also binds with high specificity to tRNAs. This Methylococcus capsulatus (strain ATCC 33009 / NCIMB 11132 / Bath) protein is RNA-binding protein Hfq.